Consider the following 255-residue polypeptide: Methanethiol S-methyltransferase (255 aa).

The next 5 membrane-spanning stretches (helical) occupy residues Phe-16–Val-36, Leu-56–Val-76, Tyr-99–Ile-119, Ile-131–Ile-151, and Val-191–Ala-211.

The protein belongs to the nurim family.

It localises to the membrane. It carries out the reaction methanethiol + S-adenosyl-L-methionine = dimethyl sulfide + S-adenosyl-L-homocysteine + H(+). Catalyzes the methylation of methanethiol (MeSH) to yield dimethylsulphide (DMS). The protein is Methanethiol S-methyltransferase of Crocosphaera subtropica (strain ATCC 51142 / BH68) (Cyanothece sp. (strain ATCC 51142)).